The sequence spans 1260 residues: Kinesin-like protein KIN-14E (1260 aa).

A MyTH4 domain is found at 115–274; it reads FQKDPIPTSL…PGREEIEALL (160 aa). One can recognise an FERM domain in the interval 279 to 593; sequence LTTIVFFLDE…HINDVMLRRY (315 aa). Coiled coils occupy residues 615 to 676 and 753 to 853; these read QNFE…LLEV and SKRL…TAAI. The 322-residue stretch at 888–1209 folds into the Kinesin motor domain; the sequence is KIRVYCRIRP…LLYASRVRTI (322 aa). 972-977 is a binding site for ATP; sequence GSGKTF. Residues 1217-1239 are calmodulin-binding; that stretch reads ISSKEMVRLKKLVAYWKEQAGKK. Positions 1221–1260 are homodimerization domain; that stretch reads EMVRLKKLVAYWKEQAGKKGEEEDLVDIEEDRTRKDEADS. Residues 1236-1260 are disordered; that stretch reads AGKKGEEEDLVDIEEDRTRKDEADS. Residues 1251 to 1260 are compositionally biased toward basic and acidic residues; sequence DRTRKDEADS.

Belongs to the TRAFAC class myosin-kinesin ATPase superfamily. Kinesin family. KIN-14 subfamily. Homodimer (via C-terminus). Binds microtubules via its N-terminus containing the MyTH4 domain and binds F-actin via its FERM domain. Interacts with KIPK1. Interacts with KIPK2. Interacts with AN. Interacts with AIR9. Interacts (via C-terminus) with KIC, CAM2, CAM4 and CAM6. KIC and calmodulin show competitive binding to KCBP. Binding to calmodulin inhibits microtubule binding activity. Binding to KIC inhibits microtubule binding activity and microtubule-stimulated ATPase activity. In terms of tissue distribution, widely expressed with the highest levels in flowers. Strongly expressed in the root tip. Highly detected in the branch apex of the trichome.

The protein localises to the cytoplasm. The protein resides in the cell cortex. It is found in the cytoskeleton. It localises to the spindle. Its subcellular location is the phragmoplast. Minus-end microtubule-dependent motor protein involved in the regulation of cell division and trichome morphogenesis through microtubules bundling. Possesses basal and microtubule-stimulated ATPase activities. Acts as a hub that brings together microtubules and actin filaments to modulate the cytoskeleton during trichome formation and morphogenesis. Could be involved in the negative regulation of root growth. The chain is Kinesin-like protein KIN-14E from Arabidopsis thaliana (Mouse-ear cress).